The chain runs to 58 residues: MRFFHPLYLLLLLLTVLVLISADKHGTKHDFLNLRRKYRRHNCPKKRCLPLHSRVPFP.

Positions 1-22 (MRFFHPLYLLLLLLTVLVLISA) are cleaved as a signal peptide.

Belongs to the Elabela/Toddler family. As to quaternary structure, interacts with aplnra and aplnrb. As to expression, expressed ubiquitously during late blastula and gastrula stages and becomes restricted to the lateral mesoderm, endoderm, and anterior and posterior notochord after gastrulation.

The protein resides in the secreted. It is found in the extracellular space. Peptide hormone that functions as endogenous ligand for the G-protein-coupled apelin receptor (aplnra and/or aplnrb), that plays a role in the regulation of normal cardiovascular function and fluid homeostasis. Functions as a balanced agonist activating both G(i) protein pathway and beta-arrestin pathway of APLNR. Downstream G proteins activation, apelin can inhibit cAMP production and activate key intracellular effectors such as ERKs. On the other hand, APLNR activation induces beta-arrestin recruitment to the membrane leading to desensitization and internalization of the receptor. Required for mesendodermal differentiation, blood vessels formation and heart morphogenesis during early development and for adult cardiovascular homeostasis. Acts as a motogen by promoting mesendodermal cell migration during gastrulation by binding and activating the apelin receptor. Acts as an early embryonic regulator of cellular movement with a role in migration and development of cardiac progenitor cells. May act as a chemoattractant for the activation of angioblast migration toward the embryonic midline, i.e. the position of the future vessel formation, during vasculogenesis. Positively regulates sinus venosus (SV)-derived endothelial cells migration into the developing heart to promote coronary blood vessel sprouting. Involved in cardioprotective functions during heart failure. Mediates myocardial contractility in an ERK1/2-dependent manner. The protein is Apelin receptor early endogenous ligand of Danio rerio (Zebrafish).